The following is a 195-amino-acid chain: Early light-induced protein 1, chloroplastic (195 aa).

The N-terminal 46 residues, 1 to 46 (MATASFNMQSVFAGGLTTRKINTNKLFSAGSFPNLKRNYPVGVRCM), are a transit peptide targeting the chloroplast. A disordered region spans residues 46–81 (MAEGGPTNEDSSPAPSTSAAQPLPKSPSPPPPMKPK). Residues 56-68 (SSPAPSTSAAQPL) show a composition bias toward low complexity. Pro residues predominate over residues 69–79 (PKSPSPPPPMK). A run of 3 helical transmembrane segments spans residues 104 to 124 (LAMV…ENVL), 131 to 151 (GVSW…VPLF), and 175 to 195 (FAML…GTLV).

It belongs to the ELIP/psbS family.

It localises to the plastid. Its subcellular location is the chloroplast thylakoid membrane. Prevents excess accumulation of free chlorophyll by inhibiting the entire chlorophyll biosynthesis pathway (e.g. 5-aminolevulinate synthesis and Mg-protoporphyrin IX chelatase activity), and hence prevent photooxidative stress. Probably involved in the integration of pigments into the mature light-harvesting pigment-protein complexes. Light-harvesting chlorophyll (LHC) a/b-binding protein required to ensure a high rate of chlorophyll accumulation during deetiolation in continuous high light. Involved in seed germination. May fulfill a photoprotective functions. This is Early light-induced protein 1, chloroplastic from Arabidopsis thaliana (Mouse-ear cress).